Reading from the N-terminus, the 237-residue chain is Ribosomal RNA large subunit methyltransferase E (237 aa).

Residues Gly76, Trp78, Asp99, Asp115, and Asp139 each coordinate S-adenosyl-L-methionine. The active-site Proton acceptor is the Lys179.

Belongs to the class I-like SAM-binding methyltransferase superfamily. RNA methyltransferase RlmE family.

The protein localises to the cytoplasm. The catalysed reaction is uridine(2552) in 23S rRNA + S-adenosyl-L-methionine = 2'-O-methyluridine(2552) in 23S rRNA + S-adenosyl-L-homocysteine + H(+). Its function is as follows. Specifically methylates the uridine in position 2552 of 23S rRNA at the 2'-O position of the ribose in the fully assembled 50S ribosomal subunit. The protein is Ribosomal RNA large subunit methyltransferase E of Rhodopseudomonas palustris (strain TIE-1).